Consider the following 96-residue polypeptide: Prokineticin Bm8-d (96 aa).

Residues 1 to 19 (MKCFAQIVVLLLVIAFSHG) form the signal peptide. 5 disulfides stabilise this stretch: Cys-26–Cys-38, Cys-32–Cys-50, Cys-37–Cys-78, Cys-60–Cys-86, and Cys-80–Cys-95.

Belongs to the AVIT (prokineticin) family. As to expression, expressed by the skin glands.

It localises to the secreted. Its function is as follows. Potent agonist for both PKR1/PROKR1 and PKR2/PROKR2, and inducer of a potent and long-lasting hyperalgesia. Also potentiates capsaicin-induced TRPV1 current, when tested on DRG neurons. At subnanomolar concentrations, this protein both induces potent chemotaxis of macrophages and stimulates LPS-induced production of the pro-inflammatory cytokines IL-1 and IL-12. In vivo, potently stimulates the contraction of the guinea-pig gastrointestinal (GI) smooth muscle (nanomolar concentration). In Bombina maxima (Giant fire-bellied toad), this protein is Prokineticin Bm8-d.